Here is a 148-residue protein sequence, read N- to C-terminus: Augurin (148 aa).

A signal peptide spans 1–31 (MGTSSARPAVLALAGLALLLLLCLGPGDVSG). 2 consecutive propeptides follow at residues 32–68 (NKLKKMLQKREGPVPSKTNVAVSEHTAKEFLGGLKRA) and 133–148 (SREGFRHGASVNYDDY).

Belongs to the augurin family. As to expression, expressed in the brain, with expression in the choroid plexus and the ventricular ependymal cells (at protein level).

Its subcellular location is the secreted. It localises to the cytoplasm. The protein resides in the apical cell membrane. Its function is as follows. Probable hormone that may attenuate cell proliferation and induce senescence of oligodendrocyte and neural precursor cells in the central nervous system. ECRG4-induced senescence is characterized by G1 arrest, RB1 dephosphorylation and accelerated CCND1 and CCND3 proteasomal degradation. This chain is Augurin, found in Rattus norvegicus (Rat).